The sequence spans 139 residues: Transcription antitermination protein NusB (139 aa).

It belongs to the NusB family.

In terms of biological role, involved in transcription antitermination. Required for transcription of ribosomal RNA (rRNA) genes. Binds specifically to the boxA antiterminator sequence of the ribosomal RNA (rrn) operons. This chain is Transcription antitermination protein NusB, found in Idiomarina loihiensis (strain ATCC BAA-735 / DSM 15497 / L2-TR).